Reading from the N-terminus, the 136-residue chain is Protein NrdI (136 aa).

This sequence belongs to the NrdI family.

Probably involved in ribonucleotide reductase function. This Salmonella dublin (strain CT_02021853) protein is Protein NrdI.